The sequence spans 329 residues: D-alanine--D-alanine ligase (329 aa).

The region spanning 120–326 (KLWLSAIGIP…FAHYLEQILR (207 aa)) is the ATP-grasp domain. 150–205 (ALAKWGKVFIKAASQGSSVGCYSASNETDLLQGIKDAFGYSEQVLIEKAVKPRELE) lines the ATP pocket. Mg(2+) is bound by residues Asp280, Glu293, and Asn295.

Belongs to the D-alanine--D-alanine ligase family. Mg(2+) is required as a cofactor. Mn(2+) serves as cofactor.

Its subcellular location is the cytoplasm. It carries out the reaction 2 D-alanine + ATP = D-alanyl-D-alanine + ADP + phosphate + H(+). The protein operates within cell wall biogenesis; peptidoglycan biosynthesis. In terms of biological role, cell wall formation. The polypeptide is D-alanine--D-alanine ligase (Aeromonas salmonicida (strain A449)).